The primary structure comprises 171 residues: Peptide deformylase (171 aa).

Fe cation-binding residues include Cys91 and His133. Glu134 is an active-site residue. Residue His137 participates in Fe cation binding.

It belongs to the polypeptide deformylase family. Fe(2+) serves as cofactor.

It carries out the reaction N-terminal N-formyl-L-methionyl-[peptide] + H2O = N-terminal L-methionyl-[peptide] + formate. Removes the formyl group from the N-terminal Met of newly synthesized proteins. Requires at least a dipeptide for an efficient rate of reaction. N-terminal L-methionine is a prerequisite for activity but the enzyme has broad specificity at other positions. This chain is Peptide deformylase, found in Hamiltonella defensa subsp. Acyrthosiphon pisum (strain 5AT).